Here is a 246-residue protein sequence, read N- to C-terminus: Pyridoxine 5'-phosphate synthase (246 aa).

3-amino-2-oxopropyl phosphate is bound by residues N8 and R19. The active-site Proton acceptor is H44. 1-deoxy-D-xylulose 5-phosphate contacts are provided by R46 and H51. E76 functions as the Proton acceptor in the catalytic mechanism. T106 serves as a coordination point for 1-deoxy-D-xylulose 5-phosphate. H198 (proton donor) is an active-site residue. 3-amino-2-oxopropyl phosphate contacts are provided by residues D199 and 221-222 (GH).

The protein belongs to the PNP synthase family. In terms of assembly, homooctamer; tetramer of dimers.

The protein resides in the cytoplasm. It catalyses the reaction 3-amino-2-oxopropyl phosphate + 1-deoxy-D-xylulose 5-phosphate = pyridoxine 5'-phosphate + phosphate + 2 H2O + H(+). The protein operates within cofactor biosynthesis; pyridoxine 5'-phosphate biosynthesis; pyridoxine 5'-phosphate from D-erythrose 4-phosphate: step 5/5. Its function is as follows. Catalyzes the complicated ring closure reaction between the two acyclic compounds 1-deoxy-D-xylulose-5-phosphate (DXP) and 3-amino-2-oxopropyl phosphate (1-amino-acetone-3-phosphate or AAP) to form pyridoxine 5'-phosphate (PNP) and inorganic phosphate. In Mesorhizobium japonicum (strain LMG 29417 / CECT 9101 / MAFF 303099) (Mesorhizobium loti (strain MAFF 303099)), this protein is Pyridoxine 5'-phosphate synthase.